The sequence spans 262 residues: Cerebellar degeneration-related antigen 1 (262 aa).

34 consecutive repeat copies span residues 3–8 (WLEDVD), 9–14 (FLEDVP), 15–20 (LLEDIP), 21–26 (LLEDVP), 27–32 (LLEDVP), 33–38 (LLEDTS), 39–44 (RLEDIN), 45–50 (LMEDMA), 51–56 (LLEDVD), 57–62 (LLEDTD), 63–68 (FLEDLD), 69–74 (FSEAMD), 75–80 (LREDKD), 81–86 (FLEDMD), 87–92 (SLEDMA), 93–98 (LLEDVD), 99–104 (LLEDTD), 105–110 (FLEDPD), 111–116 (FLEAID), 117–122 (LREDKD), 123–128 (FLEDMD), 129–134 (SLEDLE), 135–140 (AIGRCG), 141–146 (FSGRHG), 147–152 (FFGRRR), 153–158 (FSGRPK), 159–164 (LSGRLG), 165–170 (LLGRRG), 171–176 (FSGRLG), 177–182 (GYWKTW), 183–188 (IFWKTW), 189–194 (IFWKTW), 195–200 (IFRKTY), and 201–206 (IGWKTW). Positions 3–140 (WLEDVDFLED…EDLEAIGRCG (138 aa)) are 23 X 6 AA approximate repeats. Residues 141–176 (FSGRHGFFGRRRFSGRPKLSGRLGLLGRRGFSGRLG) are 6 X 6 AA approximate repeats. The segment at 177-206 (GYWKTWIFWKTWIFWKTWIFRKTYIGWKTW) is 5 X 6 AA approximate repeats.

As to expression, brain; predominantly expressed in normal neuroectodermal tissues and in certain malignant tumors.

This Homo sapiens (Human) protein is Cerebellar degeneration-related antigen 1 (CDR1).